We begin with the raw amino-acid sequence, 931 residues long: Dual serine/threonine and tyrosine protein kinase (931 aa).

The tract at residues 1-24 is disordered; it reads MEGDAPQRVSERVSGPGPGGGGGG. Positions 397–424 form a coiled coil; the sequence is RKKENELYESLMNIANRKQEEMKDMICE. One can recognise a Protein kinase domain in the interval 654 to 908; sequence PKLGQELGRG…PLLGIVQPML (255 aa). ATP-binding positions include 660-668 and K683; that span reads LGRGQYGVV. The active-site Proton acceptor is D779.

This sequence belongs to the protein kinase superfamily. Ser/Thr protein kinase family.

Its subcellular location is the cytoplasm. The protein resides in the cell membrane. It is found in the apical cell membrane. It localises to the basolateral cell membrane. The protein localises to the cell junction. It carries out the reaction L-seryl-[protein] + ATP = O-phospho-L-seryl-[protein] + ADP + H(+). The enzyme catalyses L-threonyl-[protein] + ATP = O-phospho-L-threonyl-[protein] + ADP + H(+). The catalysed reaction is L-tyrosyl-[protein] + ATP = O-phospho-L-tyrosyl-[protein] + ADP + H(+). Functionally, acts as a positive regulator of ERK phosphorylation downstream of fibroblast growth factor-receptor activation. Involved in the regulation of both caspase-dependent apoptosis and caspase-independent cell death. In the skin, it plays a predominant role in suppressing caspase-dependent apoptosis in response to UV stress in a range of dermal cell types. The polypeptide is Dual serine/threonine and tyrosine protein kinase (DSTYK) (Canis lupus familiaris (Dog)).